Reading from the N-terminus, the 653-residue chain is Chaperone protein DnaK (653 aa).

Thr200 is subject to Phosphothreonine; by autocatalysis. Residues 612–653 form a disordered region; that stretch reads QGAAGAAGAAGGAGAAAGAEAAGASQQADDVVDAEFKEVKKD. Over residues 627–639 the composition is skewed to low complexity; the sequence is AAGAEAAGASQQA.

Belongs to the heat shock protein 70 family.

Its function is as follows. Acts as a chaperone. In Paraburkholderia phymatum (strain DSM 17167 / CIP 108236 / LMG 21445 / STM815) (Burkholderia phymatum), this protein is Chaperone protein DnaK.